We begin with the raw amino-acid sequence, 257 residues long: Imidazole glycerol phosphate synthase subunit HisF (257 aa).

Catalysis depends on residues aspartate 11 and aspartate 130.

Belongs to the HisA/HisF family. In terms of assembly, heterodimer of HisH and HisF.

Its subcellular location is the cytoplasm. It carries out the reaction 5-[(5-phospho-1-deoxy-D-ribulos-1-ylimino)methylamino]-1-(5-phospho-beta-D-ribosyl)imidazole-4-carboxamide + L-glutamine = D-erythro-1-(imidazol-4-yl)glycerol 3-phosphate + 5-amino-1-(5-phospho-beta-D-ribosyl)imidazole-4-carboxamide + L-glutamate + H(+). The protein operates within amino-acid biosynthesis; L-histidine biosynthesis; L-histidine from 5-phospho-alpha-D-ribose 1-diphosphate: step 5/9. Its function is as follows. IGPS catalyzes the conversion of PRFAR and glutamine to IGP, AICAR and glutamate. The HisF subunit catalyzes the cyclization activity that produces IGP and AICAR from PRFAR using the ammonia provided by the HisH subunit. The polypeptide is Imidazole glycerol phosphate synthase subunit HisF (Proteus mirabilis (strain HI4320)).